A 283-amino-acid chain; its full sequence is ATP phosphoribosyltransferase (283 aa).

It belongs to the ATP phosphoribosyltransferase family. Long subfamily. Requires Mg(2+) as cofactor.

Its subcellular location is the cytoplasm. The catalysed reaction is 1-(5-phospho-beta-D-ribosyl)-ATP + diphosphate = 5-phospho-alpha-D-ribose 1-diphosphate + ATP. It participates in amino-acid biosynthesis; L-histidine biosynthesis; L-histidine from 5-phospho-alpha-D-ribose 1-diphosphate: step 1/9. Its activity is regulated as follows. Feedback inhibited by histidine. Its function is as follows. Catalyzes the condensation of ATP and 5-phosphoribose 1-diphosphate to form N'-(5'-phosphoribosyl)-ATP (PR-ATP). Has a crucial role in the pathway because the rate of histidine biosynthesis seems to be controlled primarily by regulation of HisG enzymatic activity. This is ATP phosphoribosyltransferase from Methanopyrus kandleri (strain AV19 / DSM 6324 / JCM 9639 / NBRC 100938).